A 513-amino-acid polypeptide reads, in one-letter code: 2,3-bisphosphoglycerate-independent phosphoglycerate mutase (513 aa).

Mn(2+)-binding residues include Asp13 and Ser63. Ser63 functions as the Phosphoserine intermediate in the catalytic mechanism. Substrate is bound by residues His124, 154-155 (RD), Arg186, Arg192, 262-265 (RADR), and Lys335. The Mn(2+) site is built by Asp403, His407, Asp444, His445, and His463.

This sequence belongs to the BPG-independent phosphoglycerate mutase family. As to quaternary structure, monomer. Requires Mn(2+) as cofactor.

It catalyses the reaction (2R)-2-phosphoglycerate = (2R)-3-phosphoglycerate. It functions in the pathway carbohydrate degradation; glycolysis; pyruvate from D-glyceraldehyde 3-phosphate: step 3/5. Functionally, catalyzes the interconversion of 2-phosphoglycerate and 3-phosphoglycerate. The sequence is that of 2,3-bisphosphoglycerate-independent phosphoglycerate mutase from Myxococcus xanthus (strain DK1622).